The primary structure comprises 103 residues: Small ribosomal subunit protein uS10 (103 aa).

This sequence belongs to the universal ribosomal protein uS10 family. As to quaternary structure, part of the 30S ribosomal subunit.

Its function is as follows. Involved in the binding of tRNA to the ribosomes. This Azotobacter vinelandii (strain DJ / ATCC BAA-1303) protein is Small ribosomal subunit protein uS10.